The following is a 1032-amino-acid chain: uncharacterized protein (1032 aa).

The Cytoplasmic segment spans residues 1 to 17; sequence MYEEIRMKFTDIFIRRP. Residues 18–36 traverse the membrane as a helical segment; sequence VLAVSISLLMIILGLQAIS. The Periplasmic portion of the chain corresponds to 37–337; that stretch reads KLAVREYPKM…TIAINSSIHE (301 aa). A helical membrane pass occupies residues 338 to 357; the sequence is VIKTIGEATLIVLVVILMFI. At 358–363 the chain is on the cytoplasmic side; sequence GSFRAI. A helical transmembrane segment spans residues 364–383; sequence LIPILAIPISLIGVLMLLQS. The Periplasmic segment spans residues 384 to 389; sequence FNFSIN. The chain crosses the membrane as a helical span at residues 390-411; that stretch reads LMTLLALILAIGLVVDDAIVVL. The Cytoplasmic segment spans residues 412–438; it reads ENIDRHIKAGETPFRAAIIGTREIAVP. Residues 439 to 457 traverse the membrane as a helical segment; that stretch reads VISMTIALIAVYSPMALMG. Residues 458-470 lie on the Periplasmic side of the membrane; that stretch reads GITGTLFKEFALT. Residues 471–493 traverse the membrane as a helical segment; it reads LAGAVFISGVVALTLSPMMSSKL. Residues 494 to 529 lie on the Cytoplasmic side of the membrane; that stretch reads LKSNAKPTWMEERVEHTLGKVNRVYEYMLDLVMLNR. The chain crosses the membrane as a helical span at residues 530–548; the sequence is KSMLAFAVVIFSTLPFLFN. Residues 549–852 lie on the Periplasmic side of the membrane; the sequence is SLSSELTPNE…ARQLVQEGNA (304 aa). A helical transmembrane segment spans residues 853 to 872; it reads LAVTFALAVIIIFLVLAIQF. At 873–878 the chain is on the cytoplasmic side; it reads ESIRDP. The helical transmembrane segment at 879 to 898 threads the bilayer; that stretch reads MVIMISVPLAVSGALVSLNI. Residues 899–910 are Periplasmic-facing; the sequence is LSFFSIAGTTLN. Residues 911–932 traverse the membrane as a helical segment; the sequence is IYSQVGLITLVGLITKHGILMC. Residues 933–960 lie on the Cytoplasmic side of the membrane; that stretch reads EVAKEEQLNHGKTRIEAITHAAKVRLRP. The chain crosses the membrane as a helical span at residues 961–979; it reads ILMTTAAMVAGLIPLLYAT. The Periplasmic portion of the chain corresponds to 980-992; the sequence is GAGAVSRFSIGIV. The chain crosses the membrane as a helical span at residues 993–1015; it reads IVAGLSIGTIFTLFVLPVVYSYV. Residues 1016–1032 lie on the Cytoplasmic side of the membrane; sequence ATEHKPLPVFDENKTTH.

Belongs to the resistance-nodulation-cell division (RND) (TC 2.A.6) family.

It is found in the cell inner membrane. Functionally, could be a drug efflux pump. This is an uncharacterized protein from Haemophilus influenzae (strain ATCC 51907 / DSM 11121 / KW20 / Rd).